The chain runs to 157 residues: Arginine repressor (157 aa).

This sequence belongs to the ArgR family.

It is found in the cytoplasm. It functions in the pathway amino-acid biosynthesis; L-arginine biosynthesis [regulation]. Functionally, regulates arginine biosynthesis genes. The sequence is that of Arginine repressor from Colwellia psychrerythraea (strain 34H / ATCC BAA-681) (Vibrio psychroerythus).